The chain runs to 664 residues: uncharacterized protein (664 aa).

A signal peptide spans 1–25 (MSWKRYLKWVSFAIIPLLFANTSIK). Residues 625 to 645 (IIVYLIIGFSVLVLFITVFIY) traverse the membrane as a helical segment.

The protein belongs to the MG414/MG415 family.

Its subcellular location is the cell membrane. This is an uncharacterized protein from Mycoplasma genitalium (strain ATCC 33530 / DSM 19775 / NCTC 10195 / G37) (Mycoplasmoides genitalium).